Consider the following 330-residue polypeptide: AA9 family lytic polysaccharide monooxygenase E (330 aa).

An N-terminal signal peptide occupies residues 1 to 20 (MRSTLVTGLIAGLLSQQAAA). His-21 and His-99 together coordinate Cu(2+). Cys-58 and Cys-193 form a disulfide bridge. The O2 site is built by His-179 and Gln-188. Position 190 (Tyr-190) interacts with Cu(2+). Residues 293-330 (CSVAKYQQCGGTGYTGCTSCASGSTCSAVSPPYYSQCV) form the CBM1 domain.

The protein belongs to the polysaccharide monooxygenase AA9 family. It depends on Cu(2+) as a cofactor.

Its subcellular location is the secreted. It catalyses the reaction [(1-&gt;4)-beta-D-glucosyl]n+m + reduced acceptor + O2 = 4-dehydro-beta-D-glucosyl-[(1-&gt;4)-beta-D-glucosyl]n-1 + [(1-&gt;4)-beta-D-glucosyl]m + acceptor + H2O.. Functionally, lytic polysaccharide monooxygenase (LPMO) that depolymerizes crystalline and amorphous polysaccharides via the oxidation of scissile alpha- or beta-(1-4)-glycosidic bonds, yielding exclusively C1 oxidation products. Catalysis by LPMOs requires the reduction of the active-site copper from Cu(II) to Cu(I) by a reducing agent and H(2)O(2) or O(2) as a cosubstrate. The polypeptide is AA9 family lytic polysaccharide monooxygenase E (gh61-5) (Neurospora crassa (strain ATCC 24698 / 74-OR23-1A / CBS 708.71 / DSM 1257 / FGSC 987)).